The sequence spans 386 residues: DNA (cytosine-5)-methyltransferase 3-like (386 aa).

The 133-residue stretch at Glu-41–Glu-173 folds into the ADD domain. The GATA-type; atypical zinc-finger motif lies at Ile-52 to Asp-82. The PHD-type; atypical zinc-finger motif lies at Gln-93–Ser-149.

As to quaternary structure, homodimer. Heterotetramer composed of 1 DNMT3A homodimer and 2 DNMT3L subunits (DNMT3L-DNMT3A-DNMT3A-DNMT3L). Interacts with histone H3 (via N-terminus); interaction is strongly inhibited by methylation at lysine 4 (H3K4me). Interacts with EZH2; the interaction is direct. Interacts with SPOCD1. Expressed at low levels in several tissues including testis, ovary, and thymus.

The protein localises to the nucleus. In terms of biological role, catalytically inactive regulatory factor of DNA methyltransferases that can either promote or inhibit DNA methylation depending on the context. Essential for the function of DNMT3A and DNMT3B: activates DNMT3A and DNMT3B by binding to their catalytic domain. Acts by accelerating the binding of DNA and S-adenosyl-L-methionine (AdoMet) to the methyltransferases and dissociates from the complex after DNA binding to the methyltransferases. Recognizes unmethylated histone H3 lysine 4 (H3K4me0) and induces de novo DNA methylation by recruitment or activation of DNMT3. Plays a key role in embryonic stem cells and germ cells. In germ cells, required for the methylation of imprinted loci together with DNMT3A. In male germ cells, specifically required to methylate retrotransposons, preventing their mobilization. Plays a key role in embryonic stem cells (ESCs) by acting both as an positive and negative regulator of DNA methylation. While it promotes DNA methylation of housekeeping genes together with DNMT3A and DNMT3B, it also acts as an inhibitor of DNA methylation at the promoter of bivalent genes. Interacts with the EZH2 component of the PRC2/EED-EZH2 complex, preventing interaction of DNMT3A and DNMT3B with the PRC2/EED-EZH2 complex, leading to maintain low methylation levels at the promoters of bivalent genes. Promotes differentiation of ESCs into primordial germ cells by inhibiting DNA methylation at the promoter of RHOX5, thereby activating its expression. The sequence is that of DNA (cytosine-5)-methyltransferase 3-like (DNMT3L) from Homo sapiens (Human).